The following is a 310-amino-acid chain: Probable deoxyhypusine synthase (310 aa).

Lys-284 (nucleophile) is an active-site residue.

It belongs to the deoxyhypusine synthase family. Requires NAD(+) as cofactor.

The enzyme catalyses [eIF5A protein]-L-lysine + spermidine = [eIF5A protein]-deoxyhypusine + propane-1,3-diamine. The protein operates within protein modification; eIF5A hypusination. In terms of biological role, catalyzes the NAD-dependent oxidative cleavage of spermidine and the subsequent transfer of the butylamine moiety of spermidine to the epsilon-amino group of a specific lysine residue of the eIF-5A precursor protein to form the intermediate deoxyhypusine residue. The chain is Probable deoxyhypusine synthase (dys) from Thermoplasma acidophilum (strain ATCC 25905 / DSM 1728 / JCM 9062 / NBRC 15155 / AMRC-C165).